The following is a 150-amino-acid chain: Truncated transcription factor CAULIFLOWER A (150 aa).

The MADS-box domain maps to methionine 1–serine 61. The 61-residue stretch at glutamine 90–histidine 150 folds into the K-box; partial domain.

In terms of assembly, homodimer capable of binding to CArG-box sequences. As to expression, expressed in some of the meristems of arrest-stage cauliflower heads.

It localises to the nucleus. Its function is as follows. Probable transcription factor that promotes early floral meristem identity in synergy with APETALA1, FRUITFULL and LEAFY. Is required subsequently for the transition of an inflorescence meristem into a floral meristem. Seems to be partially redundant to the function of APETALA1. The polypeptide is Truncated transcription factor CAULIFLOWER A (CAL-A) (Brassica oleracea var. botrytis (Cauliflower)).